A 632-amino-acid chain; its full sequence is FAD-binding monooxygenase ausB (632 aa).

Residues 1 to 50 form a disordered region; that stretch reads MASAPEVESVKTPDPASTKTQHTSIAEIHTADQTWNNESNTRLPPNHRHH. 2 stretches are compositionally biased toward polar residues: residues 15–24 and 31–43; these read PASTKTQHTS and ADQT…NTRL. FAD is bound by residues 116-119, 128-129, and Y134; these read TWYW and DI. 126-128 is an NADP(+) binding site; sequence MCD. Residues 269-275 and 292-293 each bind NADP(+); these read TGSTAIQ and RT.

Belongs to the FAD-binding monooxygenase family. FAD is required as a cofactor.

The enzyme catalyses protoaustinoid A + AH2 + O2 = berkeleyone A + A + H2O. The protein operates within secondary metabolite biosynthesis; terpenoid biosynthesis. In terms of biological role, FAD-binding monooxygenase; part of the gene cluster that mediates the biosynthesis of calidodehydroaustin, a fungal meroterpenoid. The first step of the pathway is the synthesis of 3,5-dimethylorsellinic acid by the polyketide synthase ausA. 3,5-dimethylorsellinic acid is then prenylated by the polyprenyl transferase ausN. Further epoxidation by the FAD-dependent monooxygenase ausM and cyclization by the probable terpene cyclase ausL lead to the formation of protoaustinoid A. Protoaustinoid A is then oxidized to spiro-lactone preaustinoid A3 by the combined action of the FAD-binding monooxygenases ausB and ausC, and the dioxygenase ausE. Acid-catalyzed keto-rearrangement and ring contraction of the tetraketide portion of preaustinoid A3 by ausJ lead to the formation of preaustinoid A4. The aldo-keto reductase ausK, with the help of ausH, is involved in the next step by transforming preaustinoid A4 into isoaustinone which is in turn hydroxylated by the P450 monooxygenase ausI to form austinolide. The cytochrome P450 monooxygenase ausG modifies austinolide to austinol. Austinol is further acetylated to austin by the O-acetyltransferase ausP, which spontaneously changes to dehydroaustin. The cytochrome P450 monooxygenase ausR then converts dehydroaustin is into 7-dehydrodehydroaustin. The hydroxylation catalyzed by ausR permits the O-acetyltransferase ausQ to add an additional acetyl group to the molecule, leading to the formation of acetoxydehydroaustin. The short chain dehydrogenase ausT catalyzes the reduction of the double bond present between carbon atoms 1 and 2 to convert 7-dehydrodehydroaustin into 1,2-dihydro-7-hydroxydehydroaustin. AusQ catalyzes not only an acetylation reaction but also the addition of the PKS ausV diketide product to 1,2-dihydro-7-hydroxydehydroaustin, forming precalidodehydroaustin. Finally, the iron/alpha-ketoglutarate-dependent dioxygenase converts precalidodehydroaustin into calidodehydroaustin. The sequence is that of FAD-binding monooxygenase ausB from Aspergillus calidoustus.